The chain runs to 206 residues: Large ribosomal subunit protein uL4 (206 aa).

It belongs to the universal ribosomal protein uL4 family. Part of the 50S ribosomal subunit.

One of the primary rRNA binding proteins, this protein initially binds near the 5'-end of the 23S rRNA. It is important during the early stages of 50S assembly. It makes multiple contacts with different domains of the 23S rRNA in the assembled 50S subunit and ribosome. Functionally, forms part of the polypeptide exit tunnel. In Nitrobacter hamburgensis (strain DSM 10229 / NCIMB 13809 / X14), this protein is Large ribosomal subunit protein uL4.